The chain runs to 527 residues: Coproporphyrinogen III oxidase (527 aa).

Over residues 1-14 (MSTTDRVTTPTPTV) the composition is skewed to low complexity. Positions 1–23 (MSTTDRVTTPTPTVSGTDAPGPD) are disordered. FAD is bound by residues 33–38 (GGGITG), 56–57 (ES), K64, and 78–81 (GPDS). Positions 231 to 267 (RRAARQRAAQNNAQQNSSHQNSTGQNNSAGTRGPAAS) are disordered. Residues 236-252 (QRAAQNNAQQNSSHQNS) are compositionally biased toward low complexity. FAD contacts are provided by residues V300, W448, and 487-489 (VGL).

This sequence belongs to the protoporphyrinogen/coproporphyrinogen oxidase family. Coproporphyrinogen III oxidase subfamily. FAD serves as cofactor.

The protein resides in the cytoplasm. The catalysed reaction is coproporphyrinogen III + 3 O2 = coproporphyrin III + 3 H2O2. It participates in porphyrin-containing compound metabolism; protoheme biosynthesis. Involved in coproporphyrin-dependent heme b biosynthesis. Catalyzes the oxidation of coproporphyrinogen III to coproporphyrin III. The polypeptide is Coproporphyrinogen III oxidase (Propionibacterium freudenreichii subsp. freudenreichii).